Here is a 227-residue protein sequence, read N- to C-terminus: Cytochrome c oxidase subunit 2 (227 aa).

Residues 1–26 (MATWSNLSLQDGASPLMEQLSFFHDH) lie on the Mitochondrial intermembrane side of the membrane. A helical transmembrane segment spans residues 27–48 (TMIDLLLITMIVGYSLSYMLLT). The Mitochondrial matrix portion of the chain corresponds to 49–62 (KYTNRNMLHGHLIE). A helical transmembrane segment spans residues 63–82 (TIWTALPAITLIFIALPSLR). The Mitochondrial intermembrane portion of the chain corresponds to 83–227 (LLYLLDDSSD…LFIKWLSNMM (145 aa)). Cu cation contacts are provided by histidine 161, cysteine 196, glutamate 198, cysteine 200, histidine 204, and methionine 207. Glutamate 198 contacts Mg(2+).

This sequence belongs to the cytochrome c oxidase subunit 2 family. As to quaternary structure, component of the cytochrome c oxidase (complex IV, CIV), a multisubunit enzyme composed of a catalytic core of 3 subunits and several supernumerary subunits. The complex exists as a monomer or a dimer and forms supercomplexes (SCs) in the inner mitochondrial membrane with ubiquinol-cytochrome c oxidoreductase (cytochrome b-c1 complex, complex III, CIII). Cu cation is required as a cofactor.

It is found in the mitochondrion inner membrane. It catalyses the reaction 4 Fe(II)-[cytochrome c] + O2 + 8 H(+)(in) = 4 Fe(III)-[cytochrome c] + 2 H2O + 4 H(+)(out). Its function is as follows. Component of the cytochrome c oxidase, the last enzyme in the mitochondrial electron transport chain which drives oxidative phosphorylation. The respiratory chain contains 3 multisubunit complexes succinate dehydrogenase (complex II, CII), ubiquinol-cytochrome c oxidoreductase (cytochrome b-c1 complex, complex III, CIII) and cytochrome c oxidase (complex IV, CIV), that cooperate to transfer electrons derived from NADH and succinate to molecular oxygen, creating an electrochemical gradient over the inner membrane that drives transmembrane transport and the ATP synthase. Cytochrome c oxidase is the component of the respiratory chain that catalyzes the reduction of oxygen to water. Electrons originating from reduced cytochrome c in the intermembrane space (IMS) are transferred via the dinuclear copper A center (CU(A)) of subunit 2 and heme A of subunit 1 to the active site in subunit 1, a binuclear center (BNC) formed by heme A3 and copper B (CU(B)). The BNC reduces molecular oxygen to 2 water molecules using 4 electrons from cytochrome c in the IMS and 4 protons from the mitochondrial matrix. The chain is Cytochrome c oxidase subunit 2 (COII) from Locusta migratoria (Migratory locust).